Reading from the N-terminus, the 76-residue chain is Tautomerase PptA (76 aa).

Pro2 functions as the Proton acceptor; via imino nitrogen in the catalytic mechanism.

This sequence belongs to the 4-oxalocrotonate tautomerase family. PptA subfamily. Homodimer.

The protein resides in the cytoplasm. The protein is Tautomerase PptA of Cronobacter sakazakii (strain ATCC BAA-894) (Enterobacter sakazakii).